A 626-amino-acid polypeptide reads, in one-letter code: Mitogen-activated protein kinase kinase kinase 3 (626 aa).

One can recognise a PB1 domain in the interval Asp44–Gln123. Polar residues-rich tracts occupy residues Gln146 to Tyr155, Leu165 to Arg174, and Ser219 to Asp232. 2 disordered regions span residues Gln146 to Glu184 and Ser218 to Glu262. A Phosphoserine modification is found at Ser147. Ser166 is subject to Phosphoserine; by SGK1. Phosphoserine occurs at positions 250 and 312. Position 337 is a phosphoserine; by SGK1 (Ser337). A Phosphoserine modification is found at Ser340. The region spanning Trp362 to Ala622 is the Protein kinase domain. ATP-binding positions include Leu368 to Val376 and Lys391. The Proton acceptor role is filled by Asp489.

The protein belongs to the protein kinase superfamily. STE Ser/Thr protein kinase family. MAP kinase kinase kinase subfamily. As to quaternary structure, binds both upstream activators and downstream substrates in multimolecular complexes. Part of a complex with MAP2K3, RAC1 and CCM2. Interacts with MAP2K5 and SPAG9. It depends on Mg(2+) as a cofactor. Phosphorylation at Ser-166 and Ser-337 by SGK1 inhibits its activity.

The enzyme catalyses L-seryl-[protein] + ATP = O-phospho-L-seryl-[protein] + ADP + H(+). The catalysed reaction is L-threonyl-[protein] + ATP = O-phospho-L-threonyl-[protein] + ADP + H(+). With respect to regulation, activated by phosphorylation on Thr-530. Its function is as follows. Component of a protein kinase signal transduction cascade. Mediates activation of the NF-kappa-B, AP1 and DDIT3 transcriptional regulators. The polypeptide is Mitogen-activated protein kinase kinase kinase 3 (MAP3K3) (Homo sapiens (Human)).